Here is a 317-residue protein sequence, read N- to C-terminus: Protein IMPACT-B (317 aa).

Residues 17-118 (EEIEALSSIY…EKIREFLTEK (102 aa)) form the RWD domain. The disordered stretch occupies residues 296–317 (DSTEETSKAGGKSKKPKSKKTK). Residues 306-317 (GKSKKPKSKKTK) are compositionally biased toward basic residues.

This sequence belongs to the IMPACT family. In terms of assembly, interacts with GCN1; prevents the interaction of GCN1 with EIF2AK4/GCN2 and inhibits EIF2AK4/GCN2 kinase activity. Interaction with RPL39; this interaction occurs in a GCN1-independent manner. Associates with ribosomes; this interaction occurs in a GCN1-independent manner. Associates with actin; this interaction occurs in a GCN1-independent manner.

It is found in the cytoplasm. Translational regulator that ensures constant high levels of translation upon a variety of stress conditions, such as amino acid starvation, UV-C irradiation, proteasome inhibitor treatment and glucose deprivation. Plays a role as a negative regulator of the EIF2AK4/GCN2 kinase activity; impairs GCN1-mediated EIF2AK4/GCN2 activation, and hence EIF2AK4/GCN2-mediated eIF-2-alpha phosphorylation and subsequent down-regulation of protein synthesis. Plays a role in differentiation of neuronal cells by stimulating neurite outgrowth. In Xenopus tropicalis (Western clawed frog), this protein is Protein IMPACT-B (impact-B).